Here is a 140-residue protein sequence, read N- to C-terminus: Putative pre-16S rRNA nuclease (140 aa).

Belongs to the YqgF nuclease family.

Its subcellular location is the cytoplasm. Its function is as follows. Could be a nuclease involved in processing of the 5'-end of pre-16S rRNA. The polypeptide is Putative pre-16S rRNA nuclease (Halothermothrix orenii (strain H 168 / OCM 544 / DSM 9562)).